A 168-amino-acid polypeptide reads, in one-letter code: ATP synthase subunit b (168 aa).

A helical membrane pass occupies residues 11-31; it reads EISIINTLWYLIVFSILLLAV.

This sequence belongs to the ATPase B chain family. In terms of assembly, F-type ATPases have 2 components, F(1) - the catalytic core - and F(0) - the membrane proton channel. F(1) has five subunits: alpha(3), beta(3), gamma(1), delta(1), epsilon(1). F(0) has three main subunits: a(1), b(2) and c(10-14). The alpha and beta chains form an alternating ring which encloses part of the gamma chain. F(1) is attached to F(0) by a central stalk formed by the gamma and epsilon chains, while a peripheral stalk is formed by the delta and b chains.

The protein resides in the cell membrane. Its function is as follows. F(1)F(0) ATP synthase produces ATP from ADP in the presence of a proton or sodium gradient. F-type ATPases consist of two structural domains, F(1) containing the extramembraneous catalytic core and F(0) containing the membrane proton channel, linked together by a central stalk and a peripheral stalk. During catalysis, ATP synthesis in the catalytic domain of F(1) is coupled via a rotary mechanism of the central stalk subunits to proton translocation. Functionally, component of the F(0) channel, it forms part of the peripheral stalk, linking F(1) to F(0). This chain is ATP synthase subunit b, found in Lactobacillus delbrueckii subsp. bulgaricus (strain ATCC 11842 / DSM 20081 / BCRC 10696 / JCM 1002 / NBRC 13953 / NCIMB 11778 / NCTC 12712 / WDCM 00102 / Lb 14).